The chain runs to 332 residues: Lipoyl synthase (332 aa).

[4Fe-4S] cluster-binding residues include cysteine 74, cysteine 79, cysteine 85, cysteine 100, cysteine 104, cysteine 107, and serine 314. A Radical SAM core domain is found at 85–303; that stretch reads CFGKGTATFM…EEKAYEMGFS (219 aa).

Belongs to the radical SAM superfamily. Lipoyl synthase family. It depends on [4Fe-4S] cluster as a cofactor.

The protein resides in the cytoplasm. The catalysed reaction is [[Fe-S] cluster scaffold protein carrying a second [4Fe-4S](2+) cluster] + N(6)-octanoyl-L-lysyl-[protein] + 2 oxidized [2Fe-2S]-[ferredoxin] + 2 S-adenosyl-L-methionine + 4 H(+) = [[Fe-S] cluster scaffold protein] + N(6)-[(R)-dihydrolipoyl]-L-lysyl-[protein] + 4 Fe(3+) + 2 hydrogen sulfide + 2 5'-deoxyadenosine + 2 L-methionine + 2 reduced [2Fe-2S]-[ferredoxin]. It participates in protein modification; protein lipoylation via endogenous pathway; protein N(6)-(lipoyl)lysine from octanoyl-[acyl-carrier-protein]: step 2/2. Catalyzes the radical-mediated insertion of two sulfur atoms into the C-6 and C-8 positions of the octanoyl moiety bound to the lipoyl domains of lipoate-dependent enzymes, thereby converting the octanoylated domains into lipoylated derivatives. This Polaromonas naphthalenivorans (strain CJ2) protein is Lipoyl synthase.